A 27-amino-acid chain; its full sequence is Caerulein precursor fragment R5 (27 aa).

As to expression, expressed by the skin glands.

It localises to the secreted. In terms of biological role, antimicrobial peptide. The polypeptide is Caerulein precursor fragment R5 (Xenopus ruwenzoriensis (Uganda clawed frog)).